Reading from the N-terminus, the 178-residue chain is Endoribonuclease YbeY (178 aa).

Histidine 118, histidine 122, and histidine 128 together coordinate Zn(2+).

This sequence belongs to the endoribonuclease YbeY family. Zn(2+) is required as a cofactor.

Its subcellular location is the cytoplasm. In terms of biological role, single strand-specific metallo-endoribonuclease involved in late-stage 70S ribosome quality control and in maturation of the 3' terminus of the 16S rRNA. In Mycobacterium leprae (strain Br4923), this protein is Endoribonuclease YbeY.